The chain runs to 501 residues: WD repeat-containing protein wdr-5.3 (501 aa).

3 disordered regions span residues 1–35 (MNPE…LESN), 58–85 (PIGV…YQSH), and 155–197 (KSAE…ITKK). Polar residues predominate over residues 22-35 (PNQQSLQSRMLESN). Residues 167 to 177 (SITTKPTSTIQ) are compositionally biased toward polar residues. 7 WD repeats span residues 211 to 241 (GHTK…KVWN), 253 to 283 (SHQL…KIFD), 295 to 325 (GHTN…RVWD), 337 to 367 (AHSD…RVWD), 381 to 410 (DHAP…KLWD), 422 to 455 (GHKN…LVWS), and 467 to 499 (GHTT…RIWR).

This sequence belongs to the WD repeat WDR5/wds family.

Its function is as follows. Not required for methylation of histone H3 'Lys-4'. In Caenorhabditis elegans, this protein is WD repeat-containing protein wdr-5.3 (wdr-5.3).